Reading from the N-terminus, the 218-residue chain is Ras-related protein Rab-11B (218 aa).

Position 2 is an N-acetylglycine (G2). R4 carries the citrulline modification. GTP is bound by residues S20, G21, G23, K24, S25, N26, N37, L38, S40, S42, and T43. S25 provides a ligand contact to Mg(2+). The Switch 1 signature appears at 36-47 (FNLESKSTIGVE). Mg(2+) is bound by residues T43 and D66. Residues 67–86 (TAGQERYRAITSAYYRGAVG) carry the Switch 2 motif. Residues G69, N124, K125, D127, A155, and L156 each coordinate GTP. A disordered region spans residues 184–218 (RAAHDESPGNNVVDISVPPTTDGQKPNKLQCCQNL). Residues C214 and C215 are each lipidated (S-geranylgeranyl cysteine). Cysteine methyl ester is present on C215. A propeptide spans 216-218 (QNL) (removed in mature form).

Belongs to the small GTPase superfamily. Rab family. Interacts with KCNMA1. Interacts with RAB11FIP1, RAB11FIP2, RAB11FIP3 and RAB11FIP4. May interact with TBC1D14. Interacts with ATP6V1E1. Interacts with PI4KB. Interacts (GDP-bound form) with ZFYVE27. Interacts (GDP-bound form) with KIF5A in a ZFYVE27-dependent manner. Interacts with RELCH. Interacts (in GTP-bound form) with TBC1D8B (via domain Rab-GAP TBC). Forms a complex containing RAB11B, ASAP1, Rabin8/RAB3IP, RAP11FIP3 and ARF4. Interacts with WDR44. Requires Mg(2+) as cofactor. Citrullinated by PADI4. Post-translationally, (Microbial infection) Glycosylated on arginine residues by S.typhimurium protein Ssek3.

Its subcellular location is the recycling endosome membrane. The protein resides in the cytoplasmic vesicle. It localises to the secretory vesicle. The protein localises to the synaptic vesicle membrane. It is found in the phagosome membrane. The catalysed reaction is GTP + H2O = GDP + phosphate + H(+). Its activity is regulated as follows. Regulated by guanine nucleotide exchange factors (GEFs) which promote the exchange of bound GDP for free GTP. Regulated by GTPase activating proteins (GAPs) which increase the GTP hydrolysis activity. Inhibited by GDP dissociation inhibitors (GDIs) which prevent Rab-GDP dissociation. The small GTPases Rab are key regulators of intracellular membrane trafficking, from the formation of transport vesicles to their fusion with membranes. Rabs cycle between an inactive GDP-bound form and an active GTP-bound form that is able to recruit to membranes different set of downstream effectors directly responsible for vesicle formation, movement, tethering and fusion. The small Rab GTPase RAB11B plays a role in endocytic recycling, regulating apical recycling of several transmembrane proteins including cystic fibrosis transmembrane conductance regulator/CFTR, epithelial sodium channel/ENaC, potassium voltage-gated channel, and voltage-dependent L-type calcium channel. May also regulate constitutive and regulated secretion, like insulin granule exocytosis. Required for melanosome transport and release from melanocytes. Also regulates V-ATPase intracellular transport in response to extracellular acidosis. Promotes Rabin8/RAB3IP preciliary vesicular trafficking to mother centriole by forming a ciliary targeting complex containing Rab11, ASAP1, Rabin8/RAB3IP, RAB11FIP3 and ARF4, thereby regulating ciliogenesis initiation. On the contrary, upon LPAR1 receptor signaling pathway activation, interaction with phosphorylated WDR44 prevents Rab11-RAB3IP-RAB11FIP3 complex formation and cilia growth. This is Ras-related protein Rab-11B from Homo sapiens (Human).